Here is a 173-residue protein sequence, read N- to C-terminus: MKVYDGSQTESPEQSTPERIKVGIAEYKVTTEPAMLTTSGLGSCIGIAIYDTRNTVAGLVHVMLPSAADIDGGNHAKFADTGIQALIEAMADAGASTEAMEAKIAGGSDMLDFSENGSSIGSRNAKKVRETLDEHGVPVVGEDLGGDHGRSVKLEADTGNFIVKSANTDSITL.

Belongs to the CheD family.

The enzyme catalyses L-glutaminyl-[protein] + H2O = L-glutamyl-[protein] + NH4(+). Probably deamidates glutamine residues to glutamate on methyl-accepting chemotaxis receptors (MCPs), playing an important role in chemotaxis. The chain is Probable chemoreceptor glutamine deamidase CheD from Haloarcula marismortui (strain ATCC 43049 / DSM 3752 / JCM 8966 / VKM B-1809) (Halobacterium marismortui).